We begin with the raw amino-acid sequence, 434 residues long: ATP-dependent protease ATPase subunit HslU (434 aa).

Residues Ile18, 60–65, Asp247, Glu312, and Arg384 each bind ATP; that span reads GVGKTE.

The protein belongs to the ClpX chaperone family. HslU subfamily. As to quaternary structure, a double ring-shaped homohexamer of HslV is capped on each side by a ring-shaped HslU homohexamer. The assembly of the HslU/HslV complex is dependent on binding of ATP.

The protein localises to the cytoplasm. Functionally, ATPase subunit of a proteasome-like degradation complex; this subunit has chaperone activity. The binding of ATP and its subsequent hydrolysis by HslU are essential for unfolding of protein substrates subsequently hydrolyzed by HslV. HslU recognizes the N-terminal part of its protein substrates and unfolds these before they are guided to HslV for hydrolysis. The sequence is that of ATP-dependent protease ATPase subunit HslU from Brucella anthropi (strain ATCC 49188 / DSM 6882 / CCUG 24695 / JCM 21032 / LMG 3331 / NBRC 15819 / NCTC 12168 / Alc 37) (Ochrobactrum anthropi).